The following is a 547-amino-acid chain: (E)-beta-caryophyllene synthase (547 aa).

Residues D302 and D306 each contribute to the Mg(2+) site. Substrate contacts are provided by D302, D306, R443, and N446. Positions 302-306 match the DDXXD motif motif; the sequence is DDLYD. Residues N446 and E454 each coordinate Mg(2+).

The protein belongs to the terpene synthase family. Monomer. The cofactor is Mg(2+). It depends on Mn(2+) as a cofactor.

It localises to the cytoplasm. The catalysed reaction is (2E,6E)-farnesyl diphosphate = (-)-(E)-beta-caryophyllene + diphosphate. It functions in the pathway secondary metabolite biosynthesis; terpenoid biosynthesis. Functionally, component of the volatile terpenes biosynthesis pathways. Sesquiterpene synthase that converts farnesyl diphosphate to (E)-beta-caryophyllene. Involved in indirect defense by producing volatile signals attracting natural enemies of herbivores. This Zea mays (Maize) protein is (E)-beta-caryophyllene synthase.